The primary structure comprises 309 residues: Putative F-box protein At4g05475 (309 aa).

The tract at residues 1–26 is disordered; it reads MATSTTLQSLLMKEDEEQRNKRRTTS. The F-box domain maps to 37 to 84; sequence RINWVDLPPELTTSILLRLSVTDILDNARKLCRAWRRICKDPSMWRKI.

This is Putative F-box protein At4g05475 from Arabidopsis thaliana (Mouse-ear cress).